We begin with the raw amino-acid sequence, 295 residues long: MKTGTWRVKTGFARMLKGGVVMDVTNVEQAQIAEDAGAVAVMVLEKVPADIRAAGGVARMCDPAKIEEIMDHVTIPVMAKCRIGHVAEAQVLEAIGVDMIDESEVLTPADEEHHINKWEFEVPFVCGARNLGEALRRIAEGAAMIRTKGEAGTGNVAEAVRHMRIIRREISELTRLDKEELYGKAKEYGVPFDLVAEVASLGRLPVVNFAAGGIATPADAALMMQLGADGIFVGSGIFKSDRPQEMAEAIVEATAYYDDPEVVAEVSKNLGDEVAMRGLEISEIPEEERMQLRGE.

D23 lines the D-ribose 5-phosphate pocket. The active-site Schiff-base intermediate with D-ribose 5-phosphate is K80. G152 provides a ligand contact to D-ribose 5-phosphate. D-glyceraldehyde 3-phosphate is bound at residue R164. D-ribose 5-phosphate contacts are provided by residues G213 and 234–235 (GS).

This sequence belongs to the PdxS/SNZ family. In terms of assembly, in the presence of PdxT, forms a dodecamer of heterodimers.

The catalysed reaction is aldehydo-D-ribose 5-phosphate + D-glyceraldehyde 3-phosphate + L-glutamine = pyridoxal 5'-phosphate + L-glutamate + phosphate + 3 H2O + H(+). It functions in the pathway cofactor biosynthesis; pyridoxal 5'-phosphate biosynthesis. In terms of biological role, catalyzes the formation of pyridoxal 5'-phosphate from ribose 5-phosphate (RBP), glyceraldehyde 3-phosphate (G3P) and ammonia. The ammonia is provided by the PdxT subunit. Can also use ribulose 5-phosphate and dihydroxyacetone phosphate as substrates, resulting from enzyme-catalyzed isomerization of RBP and G3P, respectively. The protein is Pyridoxal 5'-phosphate synthase subunit PdxS of Methanopyrus kandleri (strain AV19 / DSM 6324 / JCM 9639 / NBRC 100938).